Here is a 189-residue protein sequence, read N- to C-terminus: Ras-like protein 1 (189 aa).

10-17 (GAGGVGKS) is a binding site for GTP. An Effector region motif is present at residues 32-40 (YDPTIEDSY). GTP contacts are provided by residues 57 to 61 (DTAGQ) and 116 to 119 (NKCD). A Cysteine methyl ester modification is found at Cys-186. Residue Cys-186 is the site of S-geranylgeranyl cysteine attachment. The propeptide at 187–189 (KML) is removed in mature form.

This sequence belongs to the small GTPase superfamily. Ras family.

Its subcellular location is the cell membrane. The catalysed reaction is GTP + H2O = GDP + phosphate + H(+). Its activity is regulated as follows. Alternates between an inactive form bound to GDP and an active form bound to GTP. Activated by a guanine nucleotide-exchange factor (GEF) and inactivated by a GTPase-activating protein (GAP). Ras proteins bind GDP/GTP and possess intrinsic GTPase activity. Plays a role in eye development by regulating cell growth, survival of postmitotic ommatidial cells and differentiation of photoreceptor cells. During larval development, mediates Ptth/tor signaling leading to the production of ecdysone, a hormone required for the initiation of metamorphosis. This chain is Ras-like protein 1, found in Drosophila ananassae (Fruit fly).